A 105-amino-acid polypeptide reads, in one-letter code: Small ribosomal subunit protein eS25 (105 aa).

This sequence belongs to the eukaryotic ribosomal protein eS25 family. In terms of assembly, component of the small ribosomal subunit. Mature ribosomes consist of a small (40S) and a large (60S) subunit. The 40S subunit contains about 32 different proteins and 1 molecule of RNA (18S). The 60S subunit contains 45 different proteins and 3 molecules of RNA (25S, 5.8S and 5S).

The protein resides in the cytoplasm. Component of the ribosome, a large ribonucleoprotein complex responsible for the synthesis of proteins in the cell. The small ribosomal subunit (SSU) binds messenger RNAs (mRNAs) and translates the encoded message by selecting cognate aminoacyl-transfer RNA (tRNA) molecules. The large subunit (LSU) contains the ribosomal catalytic site termed the peptidyl transferase center (PTC), which catalyzes the formation of peptide bonds, thereby polymerizing the amino acids delivered by tRNAs into a polypeptide chain. The nascent polypeptides leave the ribosome through a tunnel in the LSU and interact with protein factors that function in enzymatic processing, targeting, and the membrane insertion of nascent chains at the exit of the ribosomal tunnel. The protein is Small ribosomal subunit protein eS25 (RPS25B) of Candida albicans (strain SC5314 / ATCC MYA-2876) (Yeast).